The sequence spans 247 residues: tRNA pseudouridine synthase A (247 aa).

D52 serves as the catalytic Nucleophile. Residue Y111 participates in substrate binding.

Belongs to the tRNA pseudouridine synthase TruA family. As to quaternary structure, homodimer.

The enzyme catalyses uridine(38/39/40) in tRNA = pseudouridine(38/39/40) in tRNA. Its function is as follows. Formation of pseudouridine at positions 38, 39 and 40 in the anticodon stem and loop of transfer RNAs. The chain is tRNA pseudouridine synthase A from Erythrobacter litoralis (strain HTCC2594).